The following is a 463-amino-acid chain: tRNA-2-methylthio-N(6)-dimethylallyladenosine synthase (463 aa).

The 117-residue stretch at 19–135 folds into the MTTase N-terminal domain; sequence GSYWITTFGC…LESLLNQVDS (117 aa). Residues Cys-28, Cys-64, Cys-98, Cys-170, Cys-174, and Cys-177 each coordinate [4Fe-4S] cluster. Residues 156–393 form the Radical SAM core domain; it reads RDSSFCGWVN…NSLVENIAKE (238 aa). The region spanning 396–463 is the TRAM domain; that stretch reads QRYKNTSQEI…RPFSLTAKLL (68 aa).

This sequence belongs to the methylthiotransferase family. MiaB subfamily. In terms of assembly, monomer. It depends on [4Fe-4S] cluster as a cofactor.

Its subcellular location is the cytoplasm. The catalysed reaction is N(6)-dimethylallyladenosine(37) in tRNA + (sulfur carrier)-SH + AH2 + 2 S-adenosyl-L-methionine = 2-methylsulfanyl-N(6)-dimethylallyladenosine(37) in tRNA + (sulfur carrier)-H + 5'-deoxyadenosine + L-methionine + A + S-adenosyl-L-homocysteine + 2 H(+). Functionally, catalyzes the methylthiolation of N6-(dimethylallyl)adenosine (i(6)A), leading to the formation of 2-methylthio-N6-(dimethylallyl)adenosine (ms(2)i(6)A) at position 37 in tRNAs that read codons beginning with uridine. In Prochlorococcus marinus (strain NATL1A), this protein is tRNA-2-methylthio-N(6)-dimethylallyladenosine synthase.